We begin with the raw amino-acid sequence, 129 residues long: Large ribosomal subunit protein bL12 (129 aa).

It belongs to the bacterial ribosomal protein bL12 family. In terms of assembly, homodimer. Part of the ribosomal stalk of the 50S ribosomal subunit. Forms a multimeric L10(L12)X complex, where L10 forms an elongated spine to which 2 to 4 L12 dimers bind in a sequential fashion. Binds GTP-bound translation factors.

In terms of biological role, forms part of the ribosomal stalk which helps the ribosome interact with GTP-bound translation factors. Is thus essential for accurate translation. The chain is Large ribosomal subunit protein bL12 from Treponema pallidum (strain Nichols).